A 164-amino-acid polypeptide reads, in one-letter code: Proline-rich protein 2 (164 aa).

An N-terminal signal peptide occupies residues 1–21 (MNLKVGIAVLIIALIVPSAQP).

Component of the acid-soluble organic matrix of calcified layers of the shell (at protein level).

Its subcellular location is the secreted. This Lottia gigantea (Giant owl limpet) protein is Proline-rich protein 2.